We begin with the raw amino-acid sequence, 159 residues long: Major latex protein 146 (159 aa).

The protein belongs to the MLP family. Laticifer.

Its subcellular location is the vacuole. The protein localises to the cytoplasmic vesicle. Functionally, not known; MLPs constitute up to 50% of the soluble latex protein. The chain is Major latex protein 146 (MLP146) from Papaver somniferum (Opium poppy).